Here is a 448-residue protein sequence, read N- to C-terminus: Na(+)-translocating NADH-quinone reductase subunit A (448 aa).

This sequence belongs to the NqrA family. As to quaternary structure, composed of six subunits; NqrA, NqrB, NqrC, NqrD, NqrE and NqrF.

It carries out the reaction a ubiquinone + n Na(+)(in) + NADH + H(+) = a ubiquinol + n Na(+)(out) + NAD(+). Functionally, NQR complex catalyzes the reduction of ubiquinone-1 to ubiquinol by two successive reactions, coupled with the transport of Na(+) ions from the cytoplasm to the periplasm. NqrA to NqrE are probably involved in the second step, the conversion of ubisemiquinone to ubiquinol. This is Na(+)-translocating NADH-quinone reductase subunit A from Glaesserella parasuis serovar 5 (strain SH0165) (Haemophilus parasuis).